We begin with the raw amino-acid sequence, 272 residues long: MIINHNLPAMNAHRNMGINLNQGQKAMEKLSSGLRINRAGDDAAGLAISEKMRAQIRGLDQASRNSQDGISLIQTAEGALDEVHSILQRMRELAVQSSNETNVEQDQAALNDEFQQLVEEIERIKDTTQFNTQKLLDDTVDTVQLQVGANSGELIELDLTKVDLSAIHTALAAEDITDHTNAQSAIDAIDEQLKAVSEGRSYLGAMQNRLEHTIKNLDNASENLQAAESRIRDVDMAKEMMEFTRTNILNQASQAMLAQANQQPQAVLQLLR.

The protein belongs to the bacterial flagellin family.

Its subcellular location is the secreted. It is found in the bacterial flagellum. Its function is as follows. Flagellin is the subunit protein which polymerizes to form the filaments of bacterial flagella. This is Flagellin (hag) from Halalkalibacterium halodurans (strain ATCC BAA-125 / DSM 18197 / FERM 7344 / JCM 9153 / C-125) (Bacillus halodurans).